A 238-amino-acid chain; its full sequence is Large ribosomal subunit protein uL1 (238 aa).

The protein belongs to the universal ribosomal protein uL1 family. As to quaternary structure, part of the 50S ribosomal subunit.

Binds directly to 23S rRNA. The L1 stalk is quite mobile in the ribosome, and is involved in E site tRNA release. In terms of biological role, protein L1 is also a translational repressor protein, it controls the translation of the L11 operon by binding to its mRNA. The sequence is that of Large ribosomal subunit protein uL1 from Gloeobacter violaceus (strain ATCC 29082 / PCC 7421).